A 336-amino-acid chain; its full sequence is Glucokinase (336 aa).

12-17 lines the ATP pocket; it reads ADIGGT.

The protein belongs to the bacterial glucokinase family.

It localises to the cytoplasm. The enzyme catalyses D-glucose + ATP = D-glucose 6-phosphate + ADP + H(+). In Helicobacter acinonychis (strain Sheeba), this protein is Glucokinase.